Consider the following 195-residue polypeptide: SPI-2 type 3 secretion system translocon protein SctB (195 aa).

Residues 44-80 adopt a coiled-coil conformation; the sequence is KLMELAKKLRDIMRSYNVEKQRLAWELQVNVLQTQMK. A run of 3 helical transmembrane segments spans residues 90-110, 115-135, and 170-190; these read MITA…GAVG, LIAG…GAGV, and EIMQ…AEIL.

It belongs to the SctB/EspB family. As to quaternary structure, the core secretion machinery of the T3SS is composed of approximately 20 different proteins, including cytoplasmic components, a base, an export apparatus and a needle. This subunit is involved in the formation of a pore, called the translocon, in host membrane. May form a complex with SseB and SseC/SctE2. SseB is required for correct localization of SseD/SctB2 on the bacterial cell surface. Binds to the chaperone SseA.

The protein localises to the secreted. Its subcellular location is the cell surface. The protein resides in the host membrane. In terms of biological role, component of the type III secretion system 2 (SPI-2 T3SS), also called injectisome, which is used to inject bacterial effector proteins into eukaryotic host cells. SseC/SctE2 and SseD/SctB2 are inserted into the host membrane where they form a pore and allow the translocation of effector proteins into the cytosol of target cells. Its function is as follows. Required for the translocation of SPI-2 effector proteins. Required for systemic Salmonella infection of the mouse. Essential for SpvB-induced actin depolymerization in the host cell cytoplasm. In Salmonella typhimurium (strain LT2 / SGSC1412 / ATCC 700720), this protein is SPI-2 type 3 secretion system translocon protein SctB.